The sequence spans 348 residues: Selenide, water dikinase (348 aa).

The active site involves Cys17. ATP is bound by residues Lys20 and 47–49; that span reads RAD. Asp50 contacts Mg(2+). ATP-binding positions include Asp67, Asp90, and 138–140; that span reads GHT. Mg(2+) is bound at residue Asp90. Asp226 contacts Mg(2+).

It belongs to the selenophosphate synthase 1 family. Class I subfamily. In terms of assembly, homodimer. Requires Mg(2+) as cofactor.

It carries out the reaction hydrogenselenide + ATP + H2O = selenophosphate + AMP + phosphate + 2 H(+). In terms of biological role, synthesizes selenophosphate from selenide and ATP. The protein is Selenide, water dikinase of Pelobacter propionicus (strain DSM 2379 / NBRC 103807 / OttBd1).